The primary structure comprises 242 residues: ATP synthase subunit a (242 aa).

6 helical membrane passes run 29–49, 84–104, 114–134, 140–160, 181–201, and 206–226; these read SAVAMIFVSIAASMLLITAFV, FFPLILTLFLFISLGNILGMV, IIVTFSLAMIVFTTTLVYGIY, FFSLFLPKNIPLWLAPIMVII, VAGHILLKIIAWSIVSLTWLF, and IALVIVLIGFELFISILQAYI.

Belongs to the ATPase A chain family. In terms of assembly, F-type ATPases have 2 components, CF(1) - the catalytic core - and CF(0) - the membrane proton channel. CF(1) has five subunits: alpha(3), beta(3), gamma(1), delta(1), epsilon(1). CF(0) has three main subunits: a(1), b(2) and c(9-12). The alpha and beta chains form an alternating ring which encloses part of the gamma chain. CF(1) is attached to CF(0) by a central stalk formed by the gamma and epsilon chains, while a peripheral stalk is formed by the delta and b chains.

It localises to the cell inner membrane. Key component of the proton channel; it plays a direct role in the translocation of protons across the membrane. The sequence is that of ATP synthase subunit a from Orientia tsutsugamushi (strain Ikeda) (Rickettsia tsutsugamushi).